Consider the following 537-residue polypeptide: Mitochondria-eating protein (537 aa).

The tract at residues Met-1 to Arg-270 is interaction with YWHAG/14-3-3 protein gamma. Ser-13, Ser-85, Ser-123, Ser-127, Ser-154, and Ser-157 each carry phosphoserine. Positions Ser-109–Ala-150 are disordered. Residues Lys-110–Asp-124 show a composition bias toward basic and acidic residues. Residues Asn-125–Gln-137 show a composition bias toward polar residues. 2 coiled-coil regions span residues Asn-152 to Lys-184 and Gln-210 to Arg-243. Disordered regions lie at residues Gln-171–Val-212 and Glu-233–Met-291. Basic and acidic residues predominate over residues Glu-179 to Pro-209. Positions Gly-239–Thr-251 are enriched in low complexity. The segment covering Arg-252–Ser-269 has biased composition (basic residues). Phosphoserine occurs at positions 283, 285, and 508.

Belongs to the MIEAP family. Interacts (via coiled-coil domains) with BNIP3L (via BH3 domain). Interacts (via coiled-coil domains) with BNIP3 (via BH3 domain). Interacts with YWHAG/14-3-3 protein gamma; a protein that also plays a role in MALM. As to expression, in testis, expressed primarily in spermatids.

It is found in the cytoplasm. Its subcellular location is the cytosol. The protein resides in the mitochondrion outer membrane. It localises to the mitochondrion matrix. In terms of biological role, key regulator of mitochondrial quality that mediates the repairing or degradation of unhealthy mitochondria in response to mitochondrial damage. Mediator of mitochondrial protein catabolic process (also named MALM) by mediating the degradation of damaged proteins inside mitochondria by promoting the accumulation in the mitochondrial matrix of hydrolases that are characteristic of the lysosomal lumen. Also involved in mitochondrion degradation of damaged mitochondria by promoting the formation of vacuole-like structures (named MIV), which engulf and degrade unhealthy mitochondria by accumulating lysosomes. The physical interaction of SPATA18/MIEAP, BNIP3 and BNIP3L/NIX at the mitochondrial outer membrane regulates the opening of a pore in the mitochondrial double membrane in order to mediate the translocation of lysosomal proteins from the cytoplasm to the mitochondrial matrix. Binds cardiolipin. May form molecular condensates (non-membrane-bounded organelles) within mitochondria that compartmentalize and promote cardiolipin metabolism. In Mus musculus (Mouse), this protein is Mitochondria-eating protein (Spata18).